We begin with the raw amino-acid sequence, 214 residues long: Variable small protein 24 (214 aa).

The signal sequence occupies residues 1–18 (MRKRISAIIMTLFMVFMS). Cys19 carries N-palmitoyl cysteine lipidation. Residue Cys19 is the site of S-diacylglycerol cysteine attachment. A disordered region spans residues 146 to 172 (TELGKKDASDDDTKKAIKKDNSDKTKG).

Belongs to the variable small protein (Vsp) family.

The protein localises to the cell outer membrane. The Vlp and Vsp proteins are antigenically distinct proteins, only one vlp or vsp gene is transcriptionally active at any one time. Switching between these genes is a mechanism of host immune response evasion. This is Variable small protein 24 from Borrelia hermsii.